The sequence spans 158 residues: Phosphopantetheine adenylyltransferase (158 aa).

A substrate-binding site is contributed by Thr-10. ATP-binding positions include 10–11 (TF) and His-18. Residues Lys-42, Leu-74, and Arg-88 each contribute to the substrate site. ATP is bound by residues 89 to 91 (GLR), Glu-99, and 124 to 130 (NSFISST).

It belongs to the bacterial CoaD family. Homohexamer. Mg(2+) serves as cofactor.

Its subcellular location is the cytoplasm. It catalyses the reaction (R)-4'-phosphopantetheine + ATP + H(+) = 3'-dephospho-CoA + diphosphate. The protein operates within cofactor biosynthesis; coenzyme A biosynthesis; CoA from (R)-pantothenate: step 4/5. In terms of biological role, reversibly transfers an adenylyl group from ATP to 4'-phosphopantetheine, yielding dephospho-CoA (dPCoA) and pyrophosphate. The chain is Phosphopantetheine adenylyltransferase from Shewanella sediminis (strain HAW-EB3).